Consider the following 495-residue polypeptide: Glutamyl-tRNA(Gln) amidotransferase subunit A (495 aa).

Catalysis depends on charge relay system residues lysine 75 and serine 150. The Acyl-ester intermediate role is filled by serine 174.

This sequence belongs to the amidase family. GatA subfamily. Heterotrimer of A, B and C subunits.

It catalyses the reaction L-glutamyl-tRNA(Gln) + L-glutamine + ATP + H2O = L-glutaminyl-tRNA(Gln) + L-glutamate + ADP + phosphate + H(+). Allows the formation of correctly charged Gln-tRNA(Gln) through the transamidation of misacylated Glu-tRNA(Gln) in organisms which lack glutaminyl-tRNA synthetase. The reaction takes place in the presence of glutamine and ATP through an activated gamma-phospho-Glu-tRNA(Gln). The sequence is that of Glutamyl-tRNA(Gln) amidotransferase subunit A from Paraburkholderia xenovorans (strain LB400).